We begin with the raw amino-acid sequence, 301 residues long: 2-methylisocitrate lyase (301 aa).

53–55 (SGA) provides a ligand contact to substrate. Asp92 and Asp94 together coordinate Mg(2+). Substrate-binding positions include 129–130 (CG), Arg162, Glu192, 214–216 (NMT), Arg245, and Arg274.

This sequence belongs to the isocitrate lyase/PEP mutase superfamily. Methylisocitrate lyase family. Mg(2+) is required as a cofactor.

It carries out the reaction 3-hydroxybutane-1,2,3-tricarboxylate = pyruvate + succinate. Functionally, involved in the methylcitric acid cycle. Catalyzes the cleavage of 2-methylisocitrate to yield pyruvate and succinate. The chain is 2-methylisocitrate lyase from Bacillus subtilis (strain 168).